The following is a 173-amino-acid chain: Alkyl hydroperoxide reductase AhpD (173 aa).

The active-site Proton donor is C131. C131 and C134 form a disulfide bridge. The Cysteine sulfenic acid (-SOH) intermediate role is filled by C134.

It belongs to the AhpD family.

The enzyme catalyses N(6)-[(R)-dihydrolipoyl]-L-lysyl-[lipoyl-carrier protein] + a hydroperoxide = N(6)-[(R)-lipoyl]-L-lysyl-[lipoyl-carrier protein] + an alcohol + H2O. In terms of biological role, antioxidant protein with alkyl hydroperoxidase activity. Required for the reduction of the AhpC active site cysteine residues and for the regeneration of the AhpC enzyme activity. The protein is Alkyl hydroperoxide reductase AhpD of Maricaulis maris (strain MCS10) (Caulobacter maris).